A 1167-amino-acid chain; its full sequence is DNA-directed RNA polymerase subunit beta (1167 aa).

It belongs to the RNA polymerase beta chain family. As to quaternary structure, the RNAP catalytic core consists of 2 alpha, 1 beta, 1 beta' and 1 omega subunit. When a sigma factor is associated with the core the holoenzyme is formed, which can initiate transcription.

It carries out the reaction RNA(n) + a ribonucleoside 5'-triphosphate = RNA(n+1) + diphosphate. Functionally, DNA-dependent RNA polymerase catalyzes the transcription of DNA into RNA using the four ribonucleoside triphosphates as substrates. The protein is DNA-directed RNA polymerase subunit beta of Mycolicibacterium vanbaalenii (strain DSM 7251 / JCM 13017 / BCRC 16820 / KCTC 9966 / NRRL B-24157 / PYR-1) (Mycobacterium vanbaalenii).